Here is an 80-residue protein sequence, read N- to C-terminus: RNA-binding protein Hfq (80 aa).

The region spanning 9–69 (DVFLNQVRKE…ISTILPITPI (61 aa)) is the Sm domain.

Belongs to the Hfq family. In terms of assembly, homohexamer.

Functionally, RNA chaperone that binds small regulatory RNA (sRNAs) and mRNAs to facilitate mRNA translational regulation in response to envelope stress, environmental stress and changes in metabolite concentrations. Also binds with high specificity to tRNAs. This Alkaliphilus metalliredigens (strain QYMF) protein is RNA-binding protein Hfq.